The chain runs to 277 residues: Bifunctional protein FolD (277 aa).

Residues 164–166, Ser-189, and Thr-230 contribute to the NADP(+) site; that span reads GRS.

It belongs to the tetrahydrofolate dehydrogenase/cyclohydrolase family. In terms of assembly, homodimer.

The catalysed reaction is (6R)-5,10-methylene-5,6,7,8-tetrahydrofolate + NADP(+) = (6R)-5,10-methenyltetrahydrofolate + NADPH. The enzyme catalyses (6R)-5,10-methenyltetrahydrofolate + H2O = (6R)-10-formyltetrahydrofolate + H(+). Its pathway is one-carbon metabolism; tetrahydrofolate interconversion. Catalyzes the oxidation of 5,10-methylenetetrahydrofolate to 5,10-methenyltetrahydrofolate and then the hydrolysis of 5,10-methenyltetrahydrofolate to 10-formyltetrahydrofolate. In Clostridium perfringens (strain SM101 / Type A), this protein is Bifunctional protein FolD.